Here is a 1418-residue protein sequence, read N- to C-terminus: Structural maintenance of chromosomes protein 4 (1418 aa).

Positions 1 to 122 (MSDSPLSKRQ…SPGRSPTRRL (122 aa)) are disordered. The residue at position 2 (S2) is an N-acetylserine. 2 stretches are compositionally biased toward polar residues: residues 34 to 43 (ENRVNLSENT) and 68 to 97 (SGEN…PKTS). Position 43 is a phosphothreonine (T43). Over residues 107–117 (SQSPPRSPGRS) the composition is skewed to low complexity. S113 is modified (phosphoserine). 185–192 (GPNGSGKS) lines the ATP pocket. Residues 345–673 (GQIENLNEVC…SKAQNKSKVL (329 aa)) adopt a coiled-coil conformation. The SMC hinge domain maps to 686–799 (NGFHGRLGDL…QNLKQANNVA (114 aa)). 2 coiled-coil regions span residues 849-1172 (EEVD…CDNY) and 1224-1263 (VLEE…KKKR).

Belongs to the SMC family. SMC4 subfamily. In terms of assembly, forms a heterodimer with SMC2. Component of the condensin complex, which contains the SMC2 and SMC4 heterodimer, and three non SMC subunits that probably regulate the complex: BRN1, YCS4 and YCG1/YCS5.

The protein localises to the nucleus. Its subcellular location is the cytoplasm. It is found in the chromosome. Central component of the condensin complex, a complex required for conversion of interphase chromatin into mitotic-like condense chromosomes. The condensin complex probably introduces positive supercoils into relaxed DNA in the presence of type I topoisomerases and converts nicked DNA into positive knotted forms in the presence of type II topoisomerases. The sequence is that of Structural maintenance of chromosomes protein 4 (SMC4) from Saccharomyces cerevisiae (strain ATCC 204508 / S288c) (Baker's yeast).